The chain runs to 810 residues: Valine--tRNA ligase (810 aa).

The 'HIGH' region signature appears at 45–55 (PTISGQLHIGH). A 'KMSKS' region motif is present at residues 534–538 (KMSKS). Residue Lys537 coordinates ATP.

Belongs to the class-I aminoacyl-tRNA synthetase family. ValS type 2 subfamily. Monomer.

Its subcellular location is the cytoplasm. The enzyme catalyses tRNA(Val) + L-valine + ATP = L-valyl-tRNA(Val) + AMP + diphosphate. In terms of biological role, catalyzes the attachment of valine to tRNA(Val). As ValRS can inadvertently accommodate and process structurally similar amino acids such as threonine, to avoid such errors, it has a 'posttransfer' editing activity that hydrolyzes mischarged Thr-tRNA(Val) in a tRNA-dependent manner. This chain is Valine--tRNA ligase, found in Ehrlichia ruminantium (strain Welgevonden).